A 149-amino-acid polypeptide reads, in one-letter code: Calmodulin (149 aa).

EF-hand domains lie at E8–N43, P44–D79, D81–K116, and L117–K149. The Ca(2+) site is built by D21, D23, D25, T27, E32, D57, D59, S61, T63, E68, D94, D96, N98, and E105. K116 is modified (N6,N6,N6-trimethyllysine). Positions 130, 132, 134, 136, and 141 each coordinate Ca(2+).

The protein belongs to the calmodulin family.

Functionally, calmodulin mediates the control of a large number of enzymes, ion channels and other proteins by Ca(2+). Among the enzymes to be stimulated by the calmodulin-Ca(2+) complex are a number of protein kinases and phosphatases. This is Calmodulin from Trypanosoma brucei brucei.